The chain runs to 1486 residues: MIERGKFRSLTLINWNGFFARTFDLDELVTTLSGGNGAGKSTTMAAFVTALIPDLTLLHFRNTTEAGATSGSRDKGLHGKLKAGVCYSMLDTINSRHQRVVVGVRLQQVAGRDRKVDIKPFAIQGLPMSVQPTQLVTETLNERQARVLPLNELKDKLEAMEGVQFKQFNSITDYHSLMFDLGIIARRLRSASDRSKFYRLIEASLYGGISSAITRSLRDYLLPENSGVRKAFQDMEAALRENRMTLEAIRVTQSDRDLFKHLISEATNYVAADYMRHANERRVHLDKALEFRRELHTSRQQLAAEQYKHVDMARELAEHNGAEGDLEADYQAASDHLNLVQTALRQQEKIERYEADLDELQIRLEEQNEVVAEAIERQEENEARAEAAELEVDELKSQLADYQQALDVQQTRAIQYNQAIAALNRAKELCHLPDLTADCAAEWLETFQAKELEATEKMLSLEQKMSMAQTAHSQFEQAYQLVVAINGPLARNEAWDVARELLREGVDQRHLAEQVQPLRMRLSELEQRLREQQEAERLLADFCKRQGKNFDIDELEALHQELEARIASLSDSVSNAREERMALRQEQEQLQSRIQSLMQRAPVWLAAQNSLNQLSEQCGEEFTSSQDVTEYLQQLLEREREAIVERDEVGARKNAVDEEIERLSQPGGSEDQRLNALAERFGGVLLSEIYDDVSLEDAPYFSALYGPSRHAIVVPDLSQVTEHLEGLTDCPEDLYLIEGDPQSFDDSVFSVDELEKAVVVKIADRQWRYSRFPEVPLFGRAARESRIESLHAEREVLSERFATLSFDVQKTQRLHQAFSRFIGSHLAVAFESDPEAEIRQLNSRRVELERALSNHENDNQQQRIQFEQAKEGVTALNRILPRLNLLADDSLADRVDEIRERLDEAQEAARFVQQFGNQLAKLEPIVSVLQSDPEQFEQLKEDYAYSQQMQRDARQQAFALTEVVQRRAHFSYSDSAEMLSGNSDLNEKLRERLEQAEAERTRAREALRGHAAQLSQYNQVLASLKSSYDTKKELLNDLQRELQDIGVRADSGAEERARIRRDELHAQLSNNRSRRNQLEKALTFCEAEMDNLTRKLRKLERDYFEMREQVVTAKAGWCAVMRMVKDNGVERRLHRRELAYLSADDLRSMSDKALGALRLAVADNEHLRDVLRMSEDPKRPERKIQFFVAVYQHLRERIRQDIIRTDDPVEAIEQMEIELSRLTEELTSREQKLAISSRSVANIIRKTIQREQNRIRMLNQGLQNVSFGQVNSVRLNVNVRETHAMLLDVLSEQHEQHQDLFNSNRLTFSEALAKLYQRLNPQIDMGQRAPQTIGEELLDYRNYLEMEVEVNRGSDGWLRAESGALSTGEAIGTGMSILVMVVQSWEDESRRLRGKDISPCRLLFLDEAARLDARSIATLFELCERLQMQLIIAAPENISPEKGTTYKLVRKVFQNTEHVHVVGLRGFAPQLPETLPGSDEAPSQAS.

34 to 41 lines the ATP pocket; that stretch reads GGNGAGKS. 3 coiled-coil regions span residues 326–418, 444–480, and 509–603; these read LEAD…QYNQ, LETF…QAYQ, and RHLA…RAPV. Positions 666–783 are flexible hinge; that stretch reads PGGSEDQRLN…EVPLFGRAAR (118 aa). Coiled-coil stretches lie at residues 835–923, 977–1115, and 1209–1266; these read EAEI…AKLE, EMLS…TAKA, and VEAI…QNVS.

This sequence belongs to the SMC family. MukB subfamily. In terms of assembly, homodimerization via its hinge domain. Binds to DNA via its C-terminal region. Interacts, and probably forms a ternary complex, with MukE and MukF via its C-terminal region. The complex formation is stimulated by calcium or magnesium. Interacts with tubulin-related protein FtsZ.

The protein localises to the cytoplasm. Its subcellular location is the nucleoid. In terms of biological role, plays a central role in chromosome condensation, segregation and cell cycle progression. Functions as a homodimer, which is essential for chromosome partition. Involved in negative DNA supercoiling in vivo, and by this means organize and compact chromosomes. May achieve or facilitate chromosome segregation by condensation DNA from both sides of a centrally located replisome during cell division. The chain is Chromosome partition protein MukB from Escherichia coli (strain 55989 / EAEC).